A 325-amino-acid chain; its full sequence is Tetraacyldisaccharide 4'-kinase (325 aa).

55–62 (TAGGNGKT) provides a ligand contact to ATP.

The protein belongs to the LpxK family.

The enzyme catalyses a lipid A disaccharide + ATP = a lipid IVA + ADP + H(+). It functions in the pathway glycolipid biosynthesis; lipid IV(A) biosynthesis; lipid IV(A) from (3R)-3-hydroxytetradecanoyl-[acyl-carrier-protein] and UDP-N-acetyl-alpha-D-glucosamine: step 6/6. Transfers the gamma-phosphate of ATP to the 4'-position of a tetraacyldisaccharide 1-phosphate intermediate (termed DS-1-P) to form tetraacyldisaccharide 1,4'-bis-phosphate (lipid IVA). In Salmonella newport (strain SL254), this protein is Tetraacyldisaccharide 4'-kinase.